Reading from the N-terminus, the 228-residue chain is Max-interacting protein 1 (228 aa).

Disordered stretches follow at residues 30–76 (YASS…NELE) and 160–228 (SIGS…SFAS). Residues 43–56 (QHSKPPRRLSRAQK) are compositionally biased toward basic residues. A compositionally biased stretch (polar residues) spans 57–70 (HSSGSSNTSTANRS). Residues 67 to 119 (ANRSTHNELEKNRRAHLRLCLERLKVLIPLGPDCTRHTTLGLLNKAKAHIKKL) form the bHLH domain. Acidic residues predominate over residues 173–183 (EREEIEVDVES). Over residues 207-228 (SLQSVGSDEGYSSASVKLSFAS) the composition is skewed to polar residues.

As to quaternary structure, efficient DNA binding requires dimerization with another bHLH protein. Binds DNA as a heterodimer with MAX. Interacts with SMC3. Interacts with RNF17.

The protein resides in the nucleus. In terms of biological role, transcriptional repressor. MXI1 binds with MAX to form a sequence-specific DNA-binding protein complex which recognizes the core sequence 5'-CAC[GA]TG-3'. MXI1 thus antagonizes MYC transcriptional activity by competing for MAX. Isoform Short, which lacks a segment, has a much stronger suppressive potential and associates with a SIN3 homologous protein. The sequence is that of Max-interacting protein 1 (Mxi1) from Mus musculus (Mouse).